The following is a 252-amino-acid chain: MISIDLNCDLGEGFGAYQIGNDDAILPFVSSVNIACGFHAGDPSIMRQTVEKALQHDVEIGAHPGFPDLIGFGRRIIGVSPDEVYNYVVYQIGALDGFVRAAGGKMHHVKPHGALYNMAATNLEIAEAIARAIHDINPKLYLYGLANSAFIQAVKKYELRLVQEAFADRTYQPDGTLTSRTEKYALIKNEETAIHQVLQMVQEGKIKAMDGTVITMHPQTICLHGDGEKAVQFAERIYRTFRLNGIFVCAPK.

The protein belongs to the LamB/PxpA family. As to quaternary structure, forms a complex composed of PxpA, PxpB and PxpC.

The catalysed reaction is 5-oxo-L-proline + ATP + 2 H2O = L-glutamate + ADP + phosphate + H(+). Its function is as follows. Catalyzes the cleavage of 5-oxoproline to form L-glutamate coupled to the hydrolysis of ATP to ADP and inorganic phosphate. In Bacillus cytotoxicus (strain DSM 22905 / CIP 110041 / 391-98 / NVH 391-98), this protein is 5-oxoprolinase subunit A.